The chain runs to 686 residues: MHARLLGLSALLQAAEQSARLYTVAYYFTTGRLLWGWLALAVLLPGFLVQALSYLWFRADGHPGHCSLMMLHLLQLGVWKRHWDAALTSLQKELEAPHRGWLQLQEADLSALRLLEALLQTGPHLLLQTYVFLASDFTDIVPGVSTLFSWSSLSWALVSYTRFMGFMKPGHLAMPWAALFCQQLWRMGMLGTRVLSLVLFYKAYHFWVFVVAGAHWLVMTFWLVAQQSDIIDSTCHWRLFNLLVGAVYILCYLSFWDSPSRNRMVTFYMVMLLENIILLLLATDFLQGASWTSLQTIAGVLSGFLIGSVSLVIYYSLLHPKSTDIWQGCLRKSCGIAGGDKTERRDSPRATDLAGKRTESSGSCQGASYEPTILGKPPTPEQVPPEAGLGTQVAVEDSFLSHHHWLWVKLALKTGNVSKINAAFGDNSPAYCPPAWGLSQQDYLQRKALSAQQELPSSSRDPSTLENSSAFEGVPKAEADPLETSSYVSFASDQQDEAPTQNPAATQGEGTPKEGADAVSGTQGKGTGGQQRGGEGQQSSTLYFSATAEVATSSQQEGSPATLQTAHSGRRLGKSSPAQPASPHPVGLAPFPDTMADISPILGTGPCRGFCPSAGFPGRTLSISELEEPLEPKRELSHHAAVGVWVSLPQLRTAHEPCLTSTPKSESIQTDCSCREQMKQEPSFFI.

5 consecutive transmembrane segments (helical) span residues 33–53 (LLWG…QALS), 205–225 (HFWV…WLVA), 239–259 (LFNL…WDSP), 265–285 (VTFY…ATDF), and 297–317 (IAGV…YYSL). Disordered stretches follow at residues 339-387 (GDKT…PPEA), 448-468 (ALSA…LENS), and 490-592 (FASD…APFP). Positions 340–359 (DKTERRDSPRATDLAGKRTE) are enriched in basic and acidic residues. 2 stretches are compositionally biased toward polar residues: residues 450-468 (SAQQ…LENS) and 490-509 (FASD…TQGE). The segment covering 523 to 536 (QGKGTGGQQRGGEG) has biased composition (gly residues). Over residues 550-567 (VATSSQQEGSPATLQTAH) the composition is skewed to polar residues.

Belongs to the XK family.

Its subcellular location is the cell membrane. The chain is XK-related protein 5 from Homo sapiens (Human).